Consider the following 440-residue polypeptide: Probable exopolygalacturonase C (440 aa).

The first 21 residues, 1–21, serve as a signal peptide directing secretion; the sequence is MLITNPALLGILASLVPLALG. N-linked (GlcNAc...) asparagine glycans are attached at residues Asn-84 and Asn-151. PbH1 repeat units lie at residues 188–210, 217–238, and 240–261; these read GDDI…PFNT, GTNI…AVNT, and SHNI…SIGS. The N-linked (GlcNAc...) asparagine glycan is linked to Asn-219. The active-site Proton donor is Asp-231. His-255 is an active-site residue. A glycan (N-linked (GlcNAc...) asparagine) is linked at Asn-271. The stretch at 272–293 is one PbH1 4 repeat; sequence ITNLRFEDVTVIDALYAARFKS. The N-linked (GlcNAc...) asparagine glycan is linked to Asn-313. Cys-389 and Cys-395 are disulfide-bonded. Asn-434 carries an N-linked (GlcNAc...) asparagine glycan.

This sequence belongs to the glycosyl hydrolase 28 family.

The protein resides in the secreted. It catalyses the reaction [(1-&gt;4)-alpha-D-galacturonosyl](n) + H2O = alpha-D-galacturonate + [(1-&gt;4)-alpha-D-galacturonosyl](n-1). Specific in hydrolyzing the terminal glycosidic bond of polygalacturonic acid and oligogalacturonates. The protein is Probable exopolygalacturonase C (pgxC) of Aspergillus fumigatus (strain ATCC MYA-4609 / CBS 101355 / FGSC A1100 / Af293) (Neosartorya fumigata).